The following is a 125-amino-acid chain: Holo-[acyl-carrier-protein] synthase (125 aa).

Residues Asp-8 and Glu-57 each contribute to the Mg(2+) site.

It belongs to the P-Pant transferase superfamily. AcpS family. Mg(2+) is required as a cofactor.

It localises to the cytoplasm. It carries out the reaction apo-[ACP] + CoA = holo-[ACP] + adenosine 3',5'-bisphosphate + H(+). Its function is as follows. Transfers the 4'-phosphopantetheine moiety from coenzyme A to a Ser of acyl-carrier-protein. The protein is Holo-[acyl-carrier-protein] synthase of Solibacter usitatus (strain Ellin6076).